Reading from the N-terminus, the 178-residue chain is Endoribonuclease YbeY (178 aa).

Positions 118, 122, and 128 each coordinate Zn(2+). The disordered stretch occupies residues 158–178 (ADRQSEKDRRLLDKSRYFDEP).

Belongs to the endoribonuclease YbeY family. Zn(2+) serves as cofactor.

The protein localises to the cytoplasm. In terms of biological role, single strand-specific metallo-endoribonuclease involved in late-stage 70S ribosome quality control and in maturation of the 3' terminus of the 16S rRNA. The chain is Endoribonuclease YbeY from Mycolicibacterium smegmatis (strain ATCC 700084 / mc(2)155) (Mycobacterium smegmatis).